A 673-amino-acid polypeptide reads, in one-letter code: DNA ligase (673 aa).

Residues 35–39 (DAQYD), 84–85 (SL), and glutamate 115 each bind NAD(+). Residue lysine 117 is the N6-AMP-lysine intermediate of the active site. Residues arginine 138, glutamate 178, lysine 294, and lysine 318 each coordinate NAD(+). 4 residues coordinate Zn(2+): cysteine 412, cysteine 415, cysteine 430, and cysteine 435. One can recognise a BRCT domain in the interval 594–673 (LQSDRLAGKS…DELHALLVDE (80 aa)).

Belongs to the NAD-dependent DNA ligase family. LigA subfamily. Requires Mg(2+) as cofactor. Mn(2+) serves as cofactor.

The enzyme catalyses NAD(+) + (deoxyribonucleotide)n-3'-hydroxyl + 5'-phospho-(deoxyribonucleotide)m = (deoxyribonucleotide)n+m + AMP + beta-nicotinamide D-nucleotide.. DNA ligase that catalyzes the formation of phosphodiester linkages between 5'-phosphoryl and 3'-hydroxyl groups in double-stranded DNA using NAD as a coenzyme and as the energy source for the reaction. It is essential for DNA replication and repair of damaged DNA. The protein is DNA ligase of Herpetosiphon aurantiacus (strain ATCC 23779 / DSM 785 / 114-95).